We begin with the raw amino-acid sequence, 339 residues long: Ketol-acid reductoisomerase (NADP(+)) (339 aa).

One can recognise a KARI N-terminal Rossmann domain in the interval 1-182 (MRVYYDRDAD…GGGRAGIIET (182 aa)). Residues 24-27 (YGSQ), arginine 48, serine 51, serine 53, and 83-86 (DELQ) each bind NADP(+). Histidine 108 is a catalytic residue. An NADP(+)-binding site is contributed by glycine 134. A KARI C-terminal knotted domain is found at 183–328 (TFKEECETDL…ARLRDMMPWI (146 aa)). Positions 191, 195, 227, and 231 each coordinate Mg(2+). Residue serine 252 coordinates substrate.

The protein belongs to the ketol-acid reductoisomerase family. Mg(2+) serves as cofactor.

The enzyme catalyses (2R)-2,3-dihydroxy-3-methylbutanoate + NADP(+) = (2S)-2-acetolactate + NADPH + H(+). The catalysed reaction is (2R,3R)-2,3-dihydroxy-3-methylpentanoate + NADP(+) = (S)-2-ethyl-2-hydroxy-3-oxobutanoate + NADPH + H(+). It participates in amino-acid biosynthesis; L-isoleucine biosynthesis; L-isoleucine from 2-oxobutanoate: step 2/4. It functions in the pathway amino-acid biosynthesis; L-valine biosynthesis; L-valine from pyruvate: step 2/4. Functionally, involved in the biosynthesis of branched-chain amino acids (BCAA). Catalyzes an alkyl-migration followed by a ketol-acid reduction of (S)-2-acetolactate (S2AL) to yield (R)-2,3-dihydroxy-isovalerate. In the isomerase reaction, S2AL is rearranged via a Mg-dependent methyl migration to produce 3-hydroxy-3-methyl-2-ketobutyrate (HMKB). In the reductase reaction, this 2-ketoacid undergoes a metal-dependent reduction by NADPH to yield (R)-2,3-dihydroxy-isovalerate. The chain is Ketol-acid reductoisomerase (NADP(+)) from Bradyrhizobium sp. (strain ORS 278).